The primary structure comprises 195 residues: Interferon tau-8 (195 aa).

The first 23 residues, 1-23, serve as a signal peptide directing secretion; the sequence is MAFVLSLLMALVLVSYGPGGSLG. Disulfide bonds link C24–C122 and C52–C162.

It belongs to the alpha/beta interferon family. IFN-alphaII subfamily. In terms of tissue distribution, constitutively and exclusively expressed in the mononuclear cells of the extraembryonic trophectoderm.

The protein localises to the secreted. Functionally, paracrine hormone primarily responsible for maternal recognition of pregnancy. Interacts with endometrial receptors, probably type I interferon receptors, and blocks estrogen receptor expression, preventing the estrogen-induced increase in oxytocin receptor expression in the endometrium. This results in the suppression of the pulsatile endometrial release of the luteolytic hormone prostaglandin F2-alpha, hindering the regression of the corpus luteum (luteolysis) and therefore a return to ovarian cyclicity. This, and a possible direct effect of IFN-tau on prostaglandin synthesis, leads in turn to continued ovarian progesterone secretion, which stimulates the secretion by the endometrium of the nutrients required for the growth of the conceptus. In summary, displays particularly high antiviral and antiproliferative potency concurrently with particular weak cytotoxicity, high antiluteolytic activity and immunomodulatory properties. In contrast with other IFNs, IFN-tau is not virally inducible. The sequence is that of Interferon tau-8 (IFNT8) from Ovis aries (Sheep).